A 608-amino-acid chain; its full sequence is MNAQPRSALALAARYAVPFGLLLIPIWMTQVNSVVPEPYLDEAFHIPQAQAYWSHQWTQWDPKITTPPGLYLFSYAVCALILLLRGSPEHLDPPALRATNAAAAAVLLPLRLQTALDTVRKQRNTRPSGAWLSHTVLNICLFPPLFFFSGLYYTDVLALLVVIEAYNWDLSRGRPNAVKLETAVFLVLGVLALLFRQTNIFWVSVFFGGLQVVRRLRRVTKNCESTNVADILAAGSRNELYDPLVLDASLVDYVKTAASLCSVALNNLGSVITSLVPYLIILATFGGFVLWNGSVVMGHKEFHTASLHIAQMLYIWPYFVFFSWPLLLVPMANIVLPKFMLPKFLNQGFPASRRRLPSLLTVLIILPIMLAVVHFNTIVHPFTLADNRHYVFYVFRILLNSHPYTRYVATLVYFLGAWMIISAMGYSPVTAAPGLASVVRTQAPPASATSAEERTEKTQKLERKQKGFKKSAQVASSAPAPIDPKVLADLQEHIRRRQRLEHETSRVSFVLVWLAATALSLISAPLVEPRYLIIPWVMWRLHLPPSPTPVIYRRASDEKDLEARIAVNFPLFLETVWFLLVNVITGTLFLRGGFEWPQEPGKVQRFLW.

A run of 5 helical transmembrane segments spans residues 8–28 (ALAL…PIWM), 64–84 (ITTP…ILLL), 143–163 (PPLF…LVVI), 183–203 (AVFL…IFWV), and 271–291 (VITS…FVLW). An N-linked (GlcNAc...) asparagine glycan is attached at N292. Helical transmembrane passes span 312-332 (MLYI…VPMA), 359-379 (LLTV…NTIV), and 407-427 (YVAT…MGYS). The segment at 446–466 (ASATSAEERTEKTQKLERKQK) is disordered. The segment covering 451 to 465 (AEERTEKTQKLERKQ) has biased composition (basic and acidic residues). Helical transmembrane passes span 507–527 (VSFV…APLV) and 569–589 (FPLF…GTLF).

It belongs to the ALG10 glucosyltransferase family.

The protein localises to the endoplasmic reticulum membrane. It catalyses the reaction an alpha-D-Glc-(1-&gt;3)-alpha-D-Glc-(1-&gt;3)-alpha-D-Man-(1-&gt;2)-alpha-D-Man-(1-&gt;2)-alpha-D-Man-(1-&gt;3)-[alpha-D-Man-(1-&gt;2)-alpha-D-Man-(1-&gt;3)-[alpha-D-Man-(1-&gt;2)-alpha-D-Man-(1-&gt;6)]-alpha-D-Man-(1-&gt;6)]-beta-D-Man-(1-&gt;4)-beta-D-GlcNAc-(1-&gt;4)-alpha-D-GlcNAc-diphospho-di-trans,poly-cis-dolichol + a di-trans,poly-cis-dolichyl beta-D-glucosyl phosphate = a alpha-D-Glc-(1-&gt;2)-alpha-D-Glc-(1-&gt;3)-alpha-D-Glc-(1-&gt;3)-alpha-D-Man-(1-&gt;2)-alpha-D-Man-(1-&gt;2)-alpha-D-Man-(1-&gt;3)-[alpha-D-Man-(1-&gt;2)-alpha-D-Man-(1-&gt;3)-[alpha-D-Man-(1-&gt;2)-alpha-D-Man-(1-&gt;6)]-alpha-D-Man-(1-&gt;6)]-beta-D-Man-(1-&gt;4)-beta-D-GlcNAc-(1-&gt;4)-alpha-D-GlcNAc-diphospho-di-trans,poly-cis-dolichol + a di-trans,poly-cis-dolichyl phosphate + H(+). It functions in the pathway protein modification; protein glycosylation. In terms of biological role, dol-P-Glc:Glc(2)Man(9)GlcNAc(2)-PP-Dol alpha-1,2-glucosyltransferase that operates in the biosynthetic pathway of dolichol-linked oligosaccharides, the glycan precursors employed in protein asparagine (N)-glycosylation. The assembly of dolichol-linked oligosaccharides begins on the cytosolic side of the endoplasmic reticulum membrane and finishes in its lumen. The sequential addition of sugars to dolichol pyrophosphate produces dolichol-linked oligosaccharides containing fourteen sugars, including two GlcNAcs, nine mannoses and three glucoses. Once assembled, the oligosaccharide is transferred from the lipid to nascent proteins by oligosaccharyltransferases. In the lumen of the endoplasmic reticulum, adds the third and last glucose residue from dolichyl phosphate glucose (Dol-P-Glc) onto the lipid-linked oligosaccharide intermediate Glc(2)Man(9)GlcNAc(2)-PP-Dol to produce Glc(3)Man(9)GlcNAc(2)-PP-Dol. The protein is Dol-P-Glc:Glc(2)Man(9)GlcNAc(2)-PP-Dol alpha-1,2-glucosyltransferase (alg10) of Emericella nidulans (strain FGSC A4 / ATCC 38163 / CBS 112.46 / NRRL 194 / M139) (Aspergillus nidulans).